The chain runs to 388 residues: Succinate--CoA ligase [ADP-forming] subunit beta (388 aa).

An ATP-grasp domain is found at 9-244; that stretch reads KQLFARYGMP…LSQEDERESR (236 aa). Residues Lys46, 53-55, Glu99, Thr102, and Glu107 contribute to the ATP site; that span reads GRG. 2 residues coordinate Mg(2+): Asn199 and Asp213. Substrate is bound by residues Asn264 and 321-323; that span reads GIV.

The protein belongs to the succinate/malate CoA ligase beta subunit family. In terms of assembly, heterotetramer of two alpha and two beta subunits. Mg(2+) is required as a cofactor.

It catalyses the reaction succinate + ATP + CoA = succinyl-CoA + ADP + phosphate. It carries out the reaction GTP + succinate + CoA = succinyl-CoA + GDP + phosphate. Its pathway is carbohydrate metabolism; tricarboxylic acid cycle; succinate from succinyl-CoA (ligase route): step 1/1. Succinyl-CoA synthetase functions in the citric acid cycle (TCA), coupling the hydrolysis of succinyl-CoA to the synthesis of either ATP or GTP and thus represents the only step of substrate-level phosphorylation in the TCA. The beta subunit provides nucleotide specificity of the enzyme and binds the substrate succinate, while the binding sites for coenzyme A and phosphate are found in the alpha subunit. The chain is Succinate--CoA ligase [ADP-forming] subunit beta from Serratia proteamaculans (strain 568).